The following is a 201-amino-acid chain: Cell division protein SepF (201 aa).

Residues 1 to 94 (MALKDLFSGF…TTSKNNARNV (94 aa)) are disordered. Residues 13–28 (VEEEDDELEAPPEENE) are compositionally biased toward acidic residues. Over residues 35–44 (PKQQAQSQNQ) the composition is skewed to low complexity. Residues 59–88 (SIQSVPKKQSTRLQQSSGERKYQMNNTTSK) are compositionally biased toward polar residues.

This sequence belongs to the SepF family. In terms of assembly, homodimer. Interacts with FtsZ.

It is found in the cytoplasm. Functionally, cell division protein that is part of the divisome complex and is recruited early to the Z-ring. Probably stimulates Z-ring formation, perhaps through the cross-linking of FtsZ protofilaments. Its function overlaps with FtsA. This chain is Cell division protein SepF, found in Staphylococcus saprophyticus subsp. saprophyticus (strain ATCC 15305 / DSM 20229 / NCIMB 8711 / NCTC 7292 / S-41).